The following is a 750-amino-acid chain: Xylosyl- and glucuronyltransferase LARGE2s (750 aa).

Residues 1–10 are Cytoplasmic-facing; sequence MLCPCRGKLK. Residues 11-31 traverse the membrane as a helical; Signal-anchor for type II membrane protein segment; the sequence is LLVVSLSFVILFTWLYLLVGN. Topologically, residues 32 to 750 are lumenal; sequence SENGRSLLLS…LKYLTAQRNI (719 aa). Asparagine 116, asparagine 142, and asparagine 228 each carry an N-linked (GlcNAc...) asparagine glycan. The interval 132-407 is xylosyltransferase activity; the sequence is LHVACVCAGH…FLEYDGNLLR (276 aa). Residues aspartate 236 and aspartate 238 each coordinate Mn(2+). An N-linked (GlcNAc...) asparagine glycan is attached at asparagine 266. Residues 408-750 form a glucuronyltransferase activity region; the sequence is RELFGCPSQA…LKYLTAQRNI (343 aa). The Mn(2+) site is built by aspartate 557 and aspartate 559.

The protein in the C-terminal section; belongs to the glycosyltransferase 49 family. In the N-terminal section; belongs to the glycosyltransferase 8 family. Mn(2+) is required as a cofactor.

It is found in the golgi apparatus membrane. The enzyme catalyses 3-O-[beta-D-GlcA-(1-&gt;3)-beta-D-Xyl-(1-&gt;4)-Rib-ol-P-Rib-ol-P-3-beta-D-GalNAc-(1-&gt;3)-beta-D-GlcNAc-(1-&gt;4)-(O-6-P-alpha-D-Man)]-Thr-[protein] + UDP-alpha-D-xylose = 3-O-[alpha-D-Xyl-(1-&gt;3)-beta-D-GlcA-(1-&gt;4)-beta-D-Xyl-(1-&gt;4)-Rib-ol-P-Rib-ol-P-3-beta-D-GalNAc-(1-&gt;3)-beta-D-GlcNAc-(1-&gt;4)-(O-6-P-alpha-D-Man)]-Thr-[protein] + UDP + H(+). It carries out the reaction 3-O-{(1-&gt;[3)-alpha-D-Xyl-(1-&gt;3)-beta-D-GlcA-(1-&gt;](n)-4)-beta-D-Xyl-(1-&gt;4)-Rib-ol-P-Rib-ol-P-3-beta-D-GalNAc-(1-&gt;3)-beta-D-GlcNAc-(1-&gt;4)-O-6-P-alpha-D-Man}-L-Thr-[protein] + UDP-alpha-D-glucuronate = 3-O-{beta-D-GlcA-(1-&gt;[3)-alpha-D-Xyl-(1-&gt;3)-beta-D-GlcA-(1-&gt;](n)-4)-beta-D-Xyl-(1-&gt;4)-Rib-ol-P-Rib-ol-P-3-beta-D-GalNAc-(1-&gt;3)-beta-D-GlcNAc-(1-&gt;4)-O-6-P-alpha-D-Man}-L-Thr-[protein] + UDP + H(+). It catalyses the reaction 3-O-{beta-D-GlcA-(1-&gt;[3)-alpha-D-Xyl-(1-&gt;3)-beta-D-GlcA-(1-&gt;](n)-4)-beta-D-Xyl-(1-&gt;4)-Rib-ol-P-Rib-ol-P-3-beta-D-GalNAc-(1-&gt;3)-beta-D-GlcNAc-(1-&gt;4)-O-6-P-alpha-D-Man}-L-Thr-[protein] + UDP-alpha-D-xylose = 3-O-{(1-&gt;[3)-alpha-D-Xyl-(1-&gt;3)-beta-D-GlcA-(1-&gt;](n+1)-4)-beta-D-Xyl-(1-&gt;4)-Rib-ol-P-Rib-ol-P-3-beta-D-GalNAc-(1-&gt;3)-beta-D-GlcNAc-(1-&gt;4)-O-6-P-alpha-D-Man}-L-Thr-[protein] + UDP + H(+). The protein operates within protein modification; protein glycosylation. Bifunctional glycosyltransferase with both alpha-1,3-xylosyltransferase and beta-1,3-glucuronyltransferase activities involved in the maturation of alpha-dystroglycan (DAG1) by glycosylation leading to DAG1 binding to laminin G-like domain-containing extracellular proteins with high affinity and in a phosphorylated-O-mannosyl trisaccharide dependent manner. Elongates the glucuronyl-beta-1,4-xylose-beta disaccharide primer structure by adding repeating units [-3-Xylose-alpha-1,3-GlcA-beta-1-] to produce a heteropolysaccharide. Supports the maturation of DAG1 more effectively than LARGE1. In addition, can modify both heparan sulfate (HS)- and chondroitin/dermatan sulfate (CS/DS)-proteoglycans (PGs), namely GPC4, with a glycosaminoglycan (GAG)-like polysaccharide composed of xylose and glucuronic acid to confer laminin binding. This Danio rerio (Zebrafish) protein is Xylosyl- and glucuronyltransferase LARGE2s.